The following is a 322-amino-acid chain: MWFFGSKGASGFSSRSTAEEVTHGVDGTGLTAIVTGASSGIGVETARVLSLRGVHVVMAVRNTDSGAKVKEDIVKQVPGAKLDVMELDLSSMQSVRKFASEYKSTGLPLNLLINNAGIMACPFMLSKDNIELQFATNHLGHFLLTKLLLDTMKSTSRESKREGRIVNLSSEAHRFSYPEGVRFDKINDKSSYSSMRAYGQSKLCNVLHANELTKQLKEDGVNITANSLHPGAIMTNLGRYFNPYLAVAVGAVAKYILKSVPQGAATTCYVALNPQVAGVSGEYFQDSNIAKPLPLVKDTELAKKVWDFSTKLTDSQSGESSS.

NADP(+) is bound by residues 36-42, 88-89, Asn-115, and Thr-136; these read GASSGIG and DL. Substrate is bound at residue Ser-170. Tyr-192 functions as the Proton acceptor in the catalytic mechanism. Residues 298 to 314 form an interaction with calmodulin region; that stretch reads DTELAKKVWDFSTKLTD.

This sequence belongs to the short-chain dehydrogenases/reductases (SDR) family. In terms of assembly, part of the Tic complex. Interacts with TIC110. In terms of tissue distribution, expressed in leaves and roots.

The protein localises to the plastid. It localises to the chloroplast inner membrane. In terms of biological role, involved in protein precursor import into chloroplasts. Part of the redox regulon consisting of TIC32, TIC 55 and TIC62. The polypeptide is Short-chain dehydrogenase TIC 32, chloroplastic (Arabidopsis thaliana (Mouse-ear cress)).